The following is a 1146-amino-acid chain: Reverse gyrase 1 (1146 aa).

The segment at 1-38 adopts an RG N-terminal-type zinc-finger fold; the sequence is MIKAIFDTLCPNCGGEISAERLLKGLPCEKCLPEEVNR. Positions 10, 13, 28, and 31 each coordinate Zn(2+). ATP-binding positions include Gln79 and 96–103; that span reads APTGVGKT. The Helicase ATP-binding domain occupies 83–240; it reads ARKVFLGRSF…RLKEKPNKSE (158 aa). The DEAD box signature appears at 197 to 200; the sequence is DDVD. Residues 412–565 enclose the Helicase C-terminal domain; it reads HLLWALLSLR…FKKIEEVDLK (154 aa). Residues 592–1146 form a topoisomerase I region; sequence EHVKPVLVVV…KVNEFEKANV (555 aa). Residues 596 to 728 form the Toprim domain; sequence PVLVVVESPN…NVERIEFHEV (133 aa). Mg(2+)-binding residues include Glu602 and Asp697. Residues 744–1142 form the Topo IA-type catalytic domain; it reads NENLVKAQLV…ELYKKVNEFE (399 aa). Catalysis depends on Tyr891, which acts as the O-(5'-phospho-DNA)-tyrosine intermediate.

The protein in the N-terminal section; belongs to the DEAD box helicase family. DDVD subfamily. This sequence in the C-terminal section; belongs to the type IA topoisomerase family. In terms of assembly, monomer. Zn(2+) is required as a cofactor. It depends on Mg(2+) as a cofactor.

Its subcellular location is the cytoplasm. The enzyme catalyses ATP + H2O = ADP + phosphate + H(+). In terms of biological role, modifies the topological state of DNA by introducing positive supercoils in an ATP-dependent process, increasing the linking number in steps of +1. Binds to single-stranded DNA, transiently cleaves and then rejoins the ends, introducing a positive supercoil in the process. The scissile phosphodiester is attacked by the catalytic tyrosine of the enzyme, resulting in the formation of a DNA-(5'-phosphotyrosyl)-enzyme intermediate. Probably involved in rewinding DNA strands in regions of the chromosome that have opened up to allow replication, transcription, DNA repair and/or for DNA protection. The polypeptide is Reverse gyrase 1 (Aquifex aeolicus (strain VF5)).